Consider the following 408-residue polypeptide: Cell division protein FtsZ 2 (408 aa).

Residues 130–132, glutamate 169, arginine 173, and aspartate 216 each bind GTP; that span reads GTG.

It belongs to the FtsZ family. As to quaternary structure, homodimer. Polymerizes to form a dynamic ring structure in a strictly GTP-dependent manner. Interacts directly with several other division proteins.

Its subcellular location is the cytoplasm. Its function is as follows. Essential cell division protein that forms a contractile ring structure (Z ring) at the future cell division site. The regulation of the ring assembly controls the timing and the location of cell division. One of the functions of the FtsZ ring is to recruit other cell division proteins to the septum to produce a new cell wall between the dividing cells. Binds GTP and shows GTPase activity. The sequence is that of Cell division protein FtsZ 2 from Pyrococcus furiosus (strain ATCC 43587 / DSM 3638 / JCM 8422 / Vc1).